We begin with the raw amino-acid sequence, 3503 residues long: Protein dachsous (3503 aa).

Residues 1–20 (MLRSSLLILLAIVLLGSSQA) form the signal peptide. Residues 21–3045 (ASHDQERERK…SSSGSIGDWA (3025 aa)) lie on the Extracellular side of the membrane. 14 consecutive Cadherin domains span residues 22-121 (SHDQ…APTF), 122-233 (PQTS…QPIF), 234-340 (NQSR…QPTI), 345-451 (LSDD…PPEF), 452-558 (EQDL…EPIF), 559-662 (DQSF…RPVF), 663-774 (YPRE…PPIF), 775-878 (EKAR…APEF), 879-983 (EASM…PPVF), 984-1100 (EKDE…DPKF), 1101-1203 (QKSK…APEI), 1205-1312 (DPQE…RPTF), 1313-1432 (TSSS…APEW), and 1433-1549 (PQDP…APHF). N-linked (GlcNAc...) asparagine glycosylation is found at Asn220 and Asn234. A Phosphoserine modification is found at Ser236. Asn245, Asn381, and Asn416 each carry an N-linked (GlcNAc...) asparagine glycan. Residues Asn564, Asn594, and Asn743 are each glycosylated (N-linked (GlcNAc...) asparagine). 6 N-linked (GlcNAc...) asparagine glycosylation sites follow: Asn966, Asn991, Asn1006, Asn1029, Asn1143, and Asn1236. N-linked (GlcNAc...) asparagine glycans are attached at residues Asn1453, Asn1479, Asn1524, and Asn1553. 13 consecutive Cadherin domains span residues 1556–1666 (GGKT…PPRF), 1667–1794 (LQAV…SPEF), 1796–1899 (PGSC…APRF), 1900–2004 (KLSK…RPIF), 2005–2111 (ERYP…TPVL), 2114–2269 (QNET…SPKF), 2270–2375 (SQKQ…QPTF), 2375–2479 (FPPN…APVF), 2489–2595 (AILP…RSQF), 2596–2699 (LQNQ…FPIF), 2701–2809 (RSAK…EPKF), 2810–2916 (PLTE…TPQF), and 2919–3028 (RTYR…HPGT). N-linked (GlcNAc...) asparagine glycans are attached at residues Asn1700, Asn1884, and Asn1940. The N-linked (GlcNAc...) asparagine glycan is linked to Asn2115. The tract at residues 2193–2225 (GRALHYEEEIDESSEEDPNNSTRSQRALTSSSF) is disordered. Residues 2200–2210 (EEIDESSEEDP) show a composition bias toward acidic residues. N-linked (GlcNAc...) asparagine glycans are attached at residues Asn2211 and Asn2212. Residues 2211–2225 (NNSTRSQRALTSSSF) are compositionally biased toward polar residues. Residues Asn2421, Asn2511, Asn2520, Asn2547, Asn2588, and Asn2678 are each glycosylated (N-linked (GlcNAc...) asparagine). Residues Asn2845 and Asn2967 are each glycosylated (N-linked (GlcNAc...) asparagine). The chain crosses the membrane as a helical span at residues 3046–3066 (IGLLVAFLLVLCAAAGIFLFI). Residues 3067–3503 (HMRSRKPRNA…SQRGNVGTRM (437 aa)) lie on the Cytoplasmic side of the membrane. 3 disordered regions span residues 3114-3195 (AGAA…GRIS), 3360-3404 (LSEH…IPPP), and 3431-3503 (LPRS…GTRM). Low complexity-rich tracts occupy residues 3133-3159 (GAHA…SGRG) and 3363-3372 (HSGSGASSSA). Positions 3391–3404 (KPPPSAPPTHIPPP) are enriched in pro residues. A compositionally biased stretch (low complexity) spans 3440 to 3463 (ASGSFSTSSAMSPSFSPSLSPLAT). Phosphoserine is present on residues Ser3465 and Ser3469. Residues 3492-3503 (QPSQRGNVGTRM) are compositionally biased toward polar residues.

In terms of assembly, interacts (via cytoplasmic region) with Myo31DF. Phosphorylated by fj on Ser/Thr of cadherin domains. As to expression, expressed in embryonic ectoderm. In larvae, expression is restricted to imaginal disks and brain.

The protein resides in the cell membrane. Its subcellular location is the cell junction. Its function is as follows. Required for normal morphogenesis of adult structures derived from imaginal disks. Plays a role in planar cell polarity and in determining body left-right asymmetry. Expression in segment H1 of the imaginal ring and interaction with Myo31DF are required to induce changes of cell shape and orientation in segment H2, which then gives rise to normal, dextral looping of the adult hindgut. In Drosophila melanogaster (Fruit fly), this protein is Protein dachsous (ds).